The sequence spans 3130 residues: MKTTLFCSISFCNIIFFFLELSHEHFVGQSSNTHGASSVTDFNFSEEKNLKSFEGKNNNNDNYASINRLYRKKPYMKRSLINLENDLFRLEPISYIQRYYKKNINRSDIFHNKKERGSKVYSNVSSFHSFIQEGKEEVEVFSIWGSNSVLDHIDVLRDNGTVVFSVQPYYLDIYTCKEAILFTTSFYKDLDKSSITKINEDIEKFNEEIIKNEEQCLVGGKTDFDNLLIVLENAEKANVRKTLFDNTFNDYKNKKSSFYNCLKNKKNDYDKKIKNIKNEITKLLKNIESTGNMCKTESYVMNNNLYLLRVNEVKSTPIDLYLNRAKELLESSSKLVNPIKMKLGDNKNMYSIGYIHDEIKDIIKRYNFHLKHIEKGKEYIKRITQANNIADKMKKDELIKKIFESSKHFASFKYSNEMISKLDSLFIKNEEILNNLFNNIFNIFKKKYETYVDMKTIESKYTTVMTLSEHLLEYAMDVLKANPQKPIDPKANLDSEVVKLQIKINEKSNELDNAISQVKTLIIIMKSFYDIIISEKASMDEMEKKELSLNNYIEKTDYILQTYNIFKSKSNIINNNSKNISSKYITIEGLKNDIDELNSLISYFKDSQETLIKDDELKKNMKTDYLNNVKYIEENVTHINEIILLKDSITQRIADIDELNSLNLININDFINEKNISQEKVSYNLNKLYKGSFEELESELSHFLDTKYLFHEKKSVNELQTILNTSNNECAKLNFMKSDNNNNNNNSNIINLLKTELSHLLSLKENIIKKLLNHIEQNIQNSSNKYTITYTDINNRMEDYKEEIESLEVYKHTIGNIQKEYILHLYENDKNALAVHNTSMQILQYKDAIQNIKNKISDDIKILKKYKEMNQDLLNYYEILDKKLKDNTYIKEMHTASLVQITQYIPYEDKTISELEQEFNNNNQKLDNILQDINAMNLNINILQTLNIGINACNTNNKNVEHLLNKKIELKNILNDQMKIIKNDDIIQDNEKENFSNVLKKEEEKLEKELDDIKFNNLKMDIHKLLNSYDHTKQNIESNLKINLDSFEKEKDSWVHFKSTIDSLYVEYNICNQKTHNTIKQQKNDIIELIYKRIKDINQEIIEKVDNYYSLSDKALTKLKSIHFNIDKEKYKNPKSQENIKLLEDRVMILEKKIKEDKDALIQIKNLSHDHFVNADNEKKKQKEKEEDDEQTHYSKKRKVMGDIYKDIKKNLDELNNKNLIDITLNEANKIESEYEKILIDDICEQITNEAKKSDTIKEKIESYKKDIDYVDVDVSKTRNDHHLNGDKIHDSFFYEDTLNYKAYFDKLKDLYENINKLTNESNGLKSDAHNNNTQVDKLKEINLQVFSNLGNIIKYVEKLENTLHELKDMYEFLETIDINKILKSIHNSMKKSEEYSNETKKIFEQSVNITNQFIEDVEILKTSINPNYESLNDDQIDDNIKSLVLKKEEISEKRKQVNKYITDIESNKEQSDLHLRYASRSIYVIDLFIKHEIINPSDGKNFDIIKVKEMINKTKQVSNEAMEYANKMDEKNKDIIKIENELYNLINNNIRSLKGVKYEKVRKQARNAIDDINNIHSNIKTILTKSKERLDEIKKQPNIKREGDVLNNDKTKIAYITIQINNGRIESNLLNILNMKHNIDTILNKAMDYMNDVSKSDQIVINIDSLNMNDIYNKDKDLLINILKEKQNMEAEYKKMNEMYNYVNETEKEIIKHKKNYEIRIMEHIKKETNEKKKKFMESNNKSLTTLMDSFRSMFYNEYINDYNINENFEKHQNILNEIYNGFNESYNIINTKMTEIINDNLDYNEIKEIKEVAQTEYDKLNKKVDELKNYLNNIKEQEGHRLIDYIKEKIFNLYIKCSEQQNIIDDSYNYITVKKQYIKTIEDVKFLLDSLNTIEEKNKSVANLEICTNKEDIKNLLKHVIKLANFSGIIVMSDTNTEITPENPLEDNDLLNLQLYFERKHEITSTLENDSDLELDHLGSNSDESIDNLKVYNDIIELHTYSTQILKYLDNIQKLKGDCNDLVKDCKELRELSTALYDLKIQITSVINRENDISNNIDIVSNKLNEIDAIQYNFEKYKEIFDNVEEYKTLDDTKNAYIVKKAEILKNVDINKTKEDLDIYFNDLDELEKSLTLSSNEMEIKTIVQNSYNSFSDINKNINDIDKEMKTLIPMLDELLNEGHNIDISLYNFIIRNIQIKIGNDIKNIREQENDTNICFEYIQNNYNFIKSDISIFNKYDDHIKVDNYISNNIDVVNKHNSLLSEHVINATNIIENIMTSIVEINEDTEMNSLEETQDKLLELYENFKKEKNIINNNYKIVHFNKLKEIENSLETYNSISTNFNKINETQNIDILKNEFNNIKTKINDKVKELVHVDSTLTLESIQTFNNLYGDLMSNIQDVYKYEDINNVELKKVKLYIENITNLLGRINTFIKELDKYQDENNGIDKYIEINKENNSYIIKLKEKANNLKENFSKLLQNIKRNETELYNINNIKDDIMNTGKSVNNIKQKFSSNLPLKEKLFQMEEMLLNINNIMNETKRISNTAAYTNITLQDIENNKNKENNNMNIETIDKLIDHIKIHNEKIQAEILIIDDAKRKVKEITDNINKAFNEITENYNNENNGVIKSAKNIVDEATYLNNELDKFLLKLNELLSHNNNDIKDLGDEKLILKEEEERKERERLEKAKQEEERKERERIEKEKQEKERLEREKQEQLKKEEELRKKEQERQEQQQKEEALKRQEQERLQKEEELKRQEQERLEREKQEQLQKEEELKRQEQERLQKEEALKRQEQERLQKEEELKRQEQERLEREKQEQLQKEEELKRQEQERLQKEEALKRQEQERLQKEEELKRQEQERLERKKIELAEREQHIKSKLESDMVKIIKDELTKEKDEIIKNKDIKLRHSLEQKWLKHLQNILSLKIDSLLNKNDEVIKDNETQLKTNILNSLKNQLYLNLKRELNEIIKEYEENQKKILHSNQLVNDSLEQKTNRLVDIKPTKHGDIYTNKLSDNETEMLITSKEKKDETESTKRSGTDHTNSSESTTDDNTNDRNFSRSKNLSVAIYTAGSVALCVLIFSSIGLLLIKTNSGDNNSNEINEAFEPNDDVLFKEKDEIIEITFNDNDSTI.

Positions M1–E24 are cleaved as a signal peptide. At H25–A3066 the chain is on the extracellular side. N43, N105, N123, and N159 each carry an N-linked (GlcNAc...) asparagine glycan. 3 LRR repeats span residues F182–N206, V300–N323, and I419–I443. The segment at K446 to D557 is erythrocyte binding domain (EBD). Residues K490–Q517 adopt a coiled-coil conformation. N575, N579, N635, N675, N724, and N745 each carry an N-linked (GlcNAc...) asparagine glycan. One copy of the LRR 4 repeat lies at L659–Y683. One copy of the LRR 5 repeat lies at L757–N778. An N-linked (GlcNAc...) asparagine glycan is attached at N781. Residues K801–H824 form an LRR 6 repeat. N-linked (GlcNAc...) asparagine glycosylation is found at N837 and N994. An LRR 7 repeat occupies L1116 to N1139. N1166 is a glycosylation site (N-linked (GlcNAc...) asparagine). Residues V1173–K1185 show a composition bias toward basic and acidic residues. The disordered stretch occupies residues V1173–S1195. An LRR 8 repeat occupies F1305–D1328. 2 N-linked (GlcNAc...) asparagine glycosylation sites follow: N1320 and N1332. An LRR 9 repeat occupies V1336–N1362. Residues N1398 and N1409 are each glycosylated (N-linked (GlcNAc...) asparagine). One copy of the LRR 10 repeat lies at D1438–Y1461. N-linked (GlcNAc...) asparagine glycosylation is present at N1513. LRR repeat units lie at residues I1536–K1561 and S1628–N1652. N1705, N1742, and N1785 each carry an N-linked (GlcNAc...) asparagine glycan. LRR repeat units lie at residues M1795 to E1818 and L1890 to E1913. The stretch at Y1805–H1842 forms a coiled coil. N1900, N1927, and N1971 each carry an N-linked (GlcNAc...) asparagine glycan. LRR repeat units follow at residues I2014–L2041 and E2052–F2076. N-linked (GlcNAc...) asparagine glycosylation occurs at N2113. One copy of the LRR 17 repeat lies at L2126–S2152. Residues N2212, N2268, N2346, N2421, N2456, N2473, N2484, N2537, and N2550 are each glycosylated (N-linked (GlcNAc...) asparagine). LRR repeat units follow at residues I2345–K2368 and N2409–K2434. The stretch at L2522 to T2545 is one LRR 20 repeat. LRR repeat units follow at residues I2572–K2599 and L2650–L2671. Positions I2661–H2874 form a coiled coil. The disordered stretch occupies residues R2680–L2753. 2 LRR repeats span residues L2915–V2936 and I2937–N2959. N2940, N2986, and N3015 each carry an N-linked (GlcNAc...) asparagine glycan. The segment at I3021–N3056 is disordered. A compositionally biased stretch (basic and acidic residues) spans S3023–T3038. A compositionally biased stretch (low complexity) spans D3039–D3050. N3042, N3056, and N3062 each carry an N-linked (GlcNAc...) asparagine glycan. A helical transmembrane segment spans residues I3067–L3087. Over I3088–I3130 the chain is Cytoplasmic.

Forms a heterodimer composed of the 285 kDa and the 85 kDa forms. In terms of processing, proteolytically processed into multiple fragments following schizont rupture. In the mature schizont stage prior to merozoite release, full length RH2b is processed post-Golgi into C-terminal 285 kDa and N-terminal 85 kDa forms. During merozoite invasion of host erythrocytes, further processing occurs generating a 140 kDa C-terminal form. At the same time, the C-terminal transmembrane region is probably cleaved, probably by a rhomboid protease, to shed all the different processed protein forms from the membrane leaving a transmembrane 7 kDa form on the merozoite surface.

The protein localises to the cell membrane. It localises to the cytoplasmic vesicle. Its subcellular location is the secretory vesicle. It is found in the rhoptry. The protein resides in the secreted. The protein localises to the cell junction. It localises to the tight junction. Its function is as follows. During the asexual blood stage, binds to a chymotrypsin sensitive, neuraminidase and trypsin resistant receptor on the surface of the host erythrocyte. Despite its binding capacity, appears to be dispensable for merozoite invasion of host erythrocytes. Functionally, during the asexual blood stage, binds to a trypsin-resistant and chymotrypsin and neuraminidase sensitive receptor on the surface of the host erythrocyte. In Plasmodium falciparum (isolate 3D7), this protein is Reticulocyte-binding protein homolog 2a.